The primary structure comprises 164 residues: Phosphopantetheine adenylyltransferase (164 aa).

S10 provides a ligand contact to substrate. ATP contacts are provided by residues 10 to 11 (SF) and H18. Substrate contacts are provided by K42, L74, and R88. Residues 89–91 (GLR), E99, and 124–130 (YSFLSSS) contribute to the ATP site.

It belongs to the bacterial CoaD family. Homohexamer. The cofactor is Mg(2+).

The protein localises to the cytoplasm. The catalysed reaction is (R)-4'-phosphopantetheine + ATP + H(+) = 3'-dephospho-CoA + diphosphate. It participates in cofactor biosynthesis; coenzyme A biosynthesis; CoA from (R)-pantothenate: step 4/5. Its function is as follows. Reversibly transfers an adenylyl group from ATP to 4'-phosphopantetheine, yielding dephospho-CoA (dPCoA) and pyrophosphate. The polypeptide is Phosphopantetheine adenylyltransferase (Exiguobacterium sp. (strain ATCC BAA-1283 / AT1b)).